Consider the following 894-residue polypeptide: Leucine--tRNA ligase, mitochondrial (894 aa).

The N-terminal 9 residues, 1–9 (MLPRPSSRF), are a transit peptide targeting the mitochondrion. The 'HIGH' region motif lies at 56 to 66 (PYPSGVLHIGH). The short motif at 646 to 650 (KMSKS) is the 'KMSKS' region element. Lys649 is a binding site for ATP.

Belongs to the class-I aminoacyl-tRNA synthetase family.

Its subcellular location is the mitochondrion matrix. It catalyses the reaction tRNA(Leu) + L-leucine + ATP = L-leucyl-tRNA(Leu) + AMP + diphosphate. The polypeptide is Leucine--tRNA ligase, mitochondrial (NAM2) (Saccharomyces paradoxus (Yeast)).